The following is a 424-amino-acid chain: UPF0053 protein MG146 homolog (424 aa).

In terms of domain architecture, CNNM transmembrane spans 6 to 191 (SGGLLALIII…EQNGLFTKED (186 aa)). Helical transmembrane passes span 7–27 (GGLL…SAVV), 71–91 (LITI…ILFL), 101–121 (AISS…LCEI), and 135–155 (LVYF…ITKL). CBS domains lie at 210-270 (MIKW…NEPF) and 275-335 (LLYP…EHDE).

The protein belongs to the UPF0053 family.

The protein localises to the cell membrane. This Mycoplasma pneumoniae (strain ATCC 29342 / M129 / Subtype 1) (Mycoplasmoides pneumoniae) protein is UPF0053 protein MG146 homolog.